We begin with the raw amino-acid sequence, 102 residues long: Small ribosomal subunit protein uS10 (102 aa).

This sequence belongs to the universal ribosomal protein uS10 family. In terms of assembly, part of the 30S ribosomal subunit.

In terms of biological role, involved in the binding of tRNA to the ribosomes. The sequence is that of Small ribosomal subunit protein uS10 from Myxococcus xanthus (strain DK1622).